The primary structure comprises 224 residues: UPF0758 protein VSAL_I0192 (224 aa).

The region spanning 102-224 is the MPN domain; sequence ALTSPEHTKR…IVSFAERGWI (123 aa). Zn(2+) contacts are provided by H173, H175, and D186. A JAMM motif motif is present at residues 173–186; that stretch reads HNHPSGVAEPSQAD.

This sequence belongs to the UPF0758 family.

This Aliivibrio salmonicida (strain LFI1238) (Vibrio salmonicida (strain LFI1238)) protein is UPF0758 protein VSAL_I0192.